The primary structure comprises 184 residues: Endoribonuclease YbeY (184 aa).

The Zn(2+) site is built by histidine 151, histidine 155, and histidine 161.

The protein belongs to the endoribonuclease YbeY family. Zn(2+) serves as cofactor.

The protein resides in the cytoplasm. Single strand-specific metallo-endoribonuclease involved in late-stage 70S ribosome quality control and in maturation of the 3' terminus of the 16S rRNA. This Prochlorococcus marinus (strain NATL2A) protein is Endoribonuclease YbeY.